An 834-amino-acid chain; its full sequence is ATP-dependent 6-phosphofructokinase (834 aa).

Residues 1 to 426 (MTTTSKIIND…FYEIFIACSN (426 aa)) are N-terminal catalytic PFK domain 1. ATP is bound by residues glycine 62, 123–124 (RS), and 153–156 (GDGS). Aspartate 154 is a Mg(2+) binding site. Substrate-binding positions include 199–201 (SID), arginine 236, 243–245 (MGR), glutamate 299, arginine 326, and 332–335 (HVQR). The Proton acceptor role is filled by aspartate 201. The tract at residues 427-437 (LHRRKVESKGM) is interdomain linker. The C-terminal regulatory PFK domain 2 stretch occupies residues 438–834 (GVLILHSGGP…DPNVNPQFTL (397 aa)). Beta-D-fructose 2,6-bisphosphate is bound by residues arginine 507, 566–570 (TIANN), arginine 603, 610–612 (MGA), glutamate 666, arginine 692, 698–701 (HLQQ), and arginine 764. The tract at residues 799-834 (SNLSEQDRPIKKSDISSPTSYSQKTFDPNVNPQFTL) is disordered. Basic and acidic residues predominate over residues 803 to 812 (EQDRPIKKSD). Residues 813–834 (ISSPTSYSQKTFDPNVNPQFTL) show a composition bias toward polar residues.

This sequence belongs to the phosphofructokinase type A (PFKA) family. ATP-dependent PFK group I subfamily. Eukaryotic two domain clade 'E' sub-subfamily. As to quaternary structure, homotetramer. Mg(2+) serves as cofactor. Post-translationally, the N-terminus is blocked.

It localises to the cytoplasm. It carries out the reaction beta-D-fructose 6-phosphate + ATP = beta-D-fructose 1,6-bisphosphate + ADP + H(+). It participates in carbohydrate degradation; glycolysis; D-glyceraldehyde 3-phosphate and glycerone phosphate from D-glucose: step 3/4. With respect to regulation, allosterically activated by ADP, AMP, or fructose 2,6-bisphosphate, and allosterically inhibited by ATP or citrate. In terms of biological role, catalyzes the phosphorylation of D-fructose 6-phosphate to fructose 1,6-bisphosphate by ATP, the first committing step of glycolysis. The sequence is that of ATP-dependent 6-phosphofructokinase (pfkA) from Dictyostelium discoideum (Social amoeba).